A 142-amino-acid chain; its full sequence is Calmodulin-alpha (142 aa).

At Ala2 the chain carries N-acetylalanine. EF-hand domains are found at residues Glu8–Asn43, Pro44–Asp79, Asp81–Lys116, and Leu117–Phe142. Ca(2+) contacts are provided by Asp21, Asp23, Asp25, Thr27, Glu32, Asp57, Asp59, Asn61, Thr63, Glu68, Asp94, Asp96, Asn98, Tyr100, and Glu105. Lys116 is modified (N6,N6,N6-trimethyllysine). Asp130, Asp132, Asp134, Gln136, and Glu141 together coordinate Ca(2+).

It belongs to the calmodulin family.

In terms of biological role, calmodulin mediates the control of a large number of enzymes, ion channels and other proteins by Ca(2+). Among the enzymes to be stimulated by the calmodulin-Ca(2+) complex are a number of protein kinases and phosphatases. This chain is Calmodulin-alpha, found in Arbacia punctulata (Punctuate sea urchin).